A 620-amino-acid chain; its full sequence is Chaperone protein HscA homolog (620 aa).

It belongs to the heat shock protein 70 family.

Functionally, chaperone involved in the maturation of iron-sulfur cluster-containing proteins. Has a low intrinsic ATPase activity which is markedly stimulated by HscB. This is Chaperone protein HscA homolog from Bordetella pertussis (strain Tohama I / ATCC BAA-589 / NCTC 13251).